Here is a 38-residue protein sequence, read N- to C-terminus: Photosystem I reaction center subunit IX (38 aa).

A helical transmembrane segment spans residues 4–24 (FLTAAPVVAAIWFTATAGILI).

Belongs to the PsaJ family.

The protein localises to the cellular thylakoid membrane. May help in the organization of the PsaE and PsaF subunits. This Synechococcus sp. (strain CC9605) protein is Photosystem I reaction center subunit IX.